Reading from the N-terminus, the 124-residue chain is Putative RNA polymerase II transcriptional coactivator (124 aa).

The tract at residues 1-61 is disordered; that stretch reads MSSSSSSEDE…GRLKDSDGNE (61 aa). 2 stretches are compositionally biased toward basic and acidic residues: residues 11–21 and 39–58; these read LEKKVTKEQKK and QEVK…KDSD.

The protein belongs to the transcriptional coactivator PC4 family.

It is found in the nucleus. In terms of biological role, general coactivator that functions cooperatively with TAFs and mediates functional interactions between upstream activators and the general transcriptional machinery. Binds single-stranded DNA. The chain is Putative RNA polymerase II transcriptional coactivator from Caenorhabditis elegans.